Reading from the N-terminus, the 210-residue chain is Putative protein-lysine deacylase ABHD14B (210 aa).

A2 carries the post-translational modification N-acetylalanine. S91 is subject to Phosphoserine. Active-site charge relay system residues include S111, D162, and H188.

It belongs to the AB hydrolase superfamily. ABHD14 family. May interact with TAF1. In terms of tissue distribution, ubiquitous. Detected in spleen, thymus, prostate, testis, ovary, small intestine, colon, peripheral blood leukocyte, heart, placenta, lung, liver, skeletal muscle, pancreas and kidney.

It localises to the cytoplasm. Its subcellular location is the nucleus. It carries out the reaction L-lysyl-[protein] + acetyl-CoA = N(6)-acetyl-L-lysyl-[protein] + CoA + H(+). In terms of biological role, acts as an atypical protein-lysine deacetylase in vitro. Catalyzes the deacetylation of lysine residues using CoA as substrate, generating acetyl-CoA and the free amine of protein-lysine residues. Additional experiments are however required to confirm the protein-lysine deacetylase activity in vivo. Has hydrolase activity towards various surrogate p-nitrophenyl (pNp) substrates, such as pNp-butyrate, pNp-acetate and pNp-octanoate in vitro, with a strong preference for pNp-acetate. May activate transcription. The protein is Putative protein-lysine deacylase ABHD14B of Homo sapiens (Human).